A 134-amino-acid polypeptide reads, in one-letter code: Large ribosomal subunit protein uL14 (134 aa).

This sequence belongs to the universal ribosomal protein uL14 family. Part of the 50S ribosomal subunit. Forms a cluster with proteins L3 and L19. In the 70S ribosome, L14 and L19 interact and together make contacts with the 16S rRNA in bridges B5 and B8.

Binds to 23S rRNA. Forms part of two intersubunit bridges in the 70S ribosome. This is Large ribosomal subunit protein uL14 from Deinococcus deserti (strain DSM 17065 / CIP 109153 / LMG 22923 / VCD115).